We begin with the raw amino-acid sequence, 1683 residues long: ABC transporter 7 (1683 aa).

A helical transmembrane segment spans residues 24–44; that stretch reads DYLRILLPAVVIGLSVLNLGF. A disordered region spans residues 53 to 93; the sequence is RSKSPSTHAYAPVSNGDNSRPGAHRTDISPDDDAIAQDDED. Residues 81–93 are compositionally biased toward acidic residues; that stretch reads SPDDDAIAQDDED. The next 4 membrane-spanning stretches (helical) occupy residues 127–147, 157–177, 190–210, and 221–241; these read LSVVVEELAIAGLVAVYVIAL, TLTGTIIGLTTWVYVLVLATL, HLWNHTAAIYSCQWLFLIGIF, and LAQILVIVEFALTSLLFFMAI. N247 carries N-linked (GlcNAc...) asparagine glycosylation. Transmembrane regions (helical) follow at residues 336 to 356 and 368 to 388; these read GWAVMSGMFTFAPTMLLKAIL and SVVWLYVILLPVTDIIRSLGD. The ABC transmembrane type-1 1 domain occupies 338–664; sequence AVMSGMFTFA…LGDMLAHVQE (327 aa). The interval 451 to 473 is disordered; the sequence is GDNDESEDGKDGDKDKEDSSDEQ. N-linked (GlcNAc...) asparagine glycosylation is present at N489. Transmembrane regions (helical) follow at residues 496–516 and 518–538; these read YLHFLFASAPTQLLVSVVLLY and VLGMSAIPGFVVMVLLLPVNI. N-linked (GlcNAc...) asparagine glycosylation is present at N545. 2 helical membrane passes run 602-622 and 632-648; these read VWACAVAVWNTVPLLITFFSF and PLHPSIAFTSISLFMLL. The region spanning 700–949 is the ABC transporter 1 domain; sequence IALKDAAFIW…GALGEEIAQK (250 aa). ATP is bound at residue 742–749; it reads GPTGSGKT. The tract at residues 952–998 is disordered; the sequence is SETPNISRIPSRVPSSVGEGSGNTLLDTDGDDHLSKPKNAKKAKKAE. Residue N956 is glycosylated (N-linked (GlcNAc...) asparagine). The helical transmembrane segment at 1016–1036 threads the bilayer; the sequence is LYLASMGSWWFWVVAGCIFIS. In terms of domain architecture, ABC transmembrane type-1 2 spans 1028–1351; the sequence is VVAGCIFISQ…NILWLVRLYS (324 aa). N1097 carries an N-linked (GlcNAc...) asparagine glycan. 3 helical membrane-spanning segments follow: residues 1111 to 1131, 1182 to 1202, and 1204 to 1224; these read AQYYLVVLAIIGLAGSLTAFL, VDQEVAPIAIGILSCALGITV, and VVLIASITPGFLIAAVFITIA. N1277 is a glycosylation site (N-linked (GlcNAc...) asparagine). Helical transmembrane passes span 1304 to 1324 and 1327 to 1347; these read LLGDFVSFFAGVFVILSIGVI and GWAGISLSYAIGFAENILWLV. Residues 1392 to 1649 form the ABC transporter 2 domain; that stretch reads VEFINYTTSY…GEGGSFKSMC (258 aa). 2 N-linked (GlcNAc...) asparagine glycosylation sites follow: N1396 and N1411. Residue 1426 to 1433 participates in ATP binding; sequence GRTGAGKS. Residues N1541 and N1552 are each glycosylated (N-linked (GlcNAc...) asparagine).

It belongs to the ABC transporter superfamily.

Its subcellular location is the membrane. In terms of biological role, ABC transporter; part of the gene cluster that mediates the biosynthesis of pyriculol and pyriculariol, two heptaketides that induce lesion formation upon application on rice leaves but are dispensable for pathogenicity. With the MFS transporter MFS1, is most likely responsible for pyriculol and pyriculariol secretion and thereby may contribute to intrinsic resistance. This Pyricularia oryzae (strain 70-15 / ATCC MYA-4617 / FGSC 8958) (Rice blast fungus) protein is ABC transporter 7.